We begin with the raw amino-acid sequence, 329 residues long: Transcription factor TGA2.3 (329 aa).

The interval 1–48 is disordered; sequence MADMSPRTDTSTDDTDDNHMLEPGQLALAAASDSDRSKDKHEDQKTLR. Basic and acidic residues predominate over residues 33 to 46; sequence DSDRSKDKHEDQKT. The bZIP domain occupies 43 to 87; it reads DQKTLRRLAQNREAARKSRLRKKAYVQQLENSRLKLTQLEQELQR. A basic motif region spans residues 45-65; that stretch reads KTLRRLAQNREAARKSRLRKK. The tract at residues 71–85 is leucine-zipper; the sequence is LENSRLKLTQLEQEL. The 217-residue stretch at 110–326 folds into the DOG1 domain; that stretch reads ALAFDMEYAR…RALSSLWLAR (217 aa).

Belongs to the bZIP family. In terms of assembly, interacts with NPR1/NH1 and NPR3/NH3.

It is found in the nucleus. In terms of biological role, transcriptional regulator involved in defense response. In Oryza sativa subsp. japonica (Rice), this protein is Transcription factor TGA2.3.